The primary structure comprises 300 residues: Ribosomal RNA small subunit methyltransferase H (300 aa).

Residues 46–48 (GGH), Asp-65, Phe-92, Asp-107, and Gln-114 contribute to the S-adenosyl-L-methionine site.

It belongs to the methyltransferase superfamily. RsmH family.

The protein localises to the cytoplasm. The catalysed reaction is cytidine(1402) in 16S rRNA + S-adenosyl-L-methionine = N(4)-methylcytidine(1402) in 16S rRNA + S-adenosyl-L-homocysteine + H(+). Functionally, specifically methylates the N4 position of cytidine in position 1402 (C1402) of 16S rRNA. This is Ribosomal RNA small subunit methyltransferase H from Prochlorococcus marinus (strain MIT 9301).